We begin with the raw amino-acid sequence, 275 residues long: Large ribosomal subunit protein uL2 (275 aa).

Disordered stretches follow at residues 1 to 24 (MGIRSFRPYTPGTRQATVSDFSEI) and 208 to 275 (AGRT…RRRR). The segment covering 12–22 (GTRQATVSDFS) has biased composition (polar residues). Basic residues-rich tracts occupy residues 208 to 219 (AGRTRHLGRRPQ) and 255 to 275 (LGKKTRKKKKQSSSLIVRRRR).

Belongs to the universal ribosomal protein uL2 family. In terms of assembly, part of the 50S ribosomal subunit. Forms a bridge to the 30S subunit in the 70S ribosome.

One of the primary rRNA binding proteins. Required for association of the 30S and 50S subunits to form the 70S ribosome, for tRNA binding and peptide bond formation. It has been suggested to have peptidyltransferase activity; this is somewhat controversial. Makes several contacts with the 16S rRNA in the 70S ribosome. This Picosynechococcus sp. (strain ATCC 27264 / PCC 7002 / PR-6) (Agmenellum quadruplicatum) protein is Large ribosomal subunit protein uL2.